The primary structure comprises 552 residues: Hydroxylamine reductase (552 aa).

The [2Fe-2S] cluster site is built by Cys-3, Cys-6, Cys-18, and Cys-25. Residues His-250, Glu-274, Cys-318, Cys-406, Cys-434, Cys-459, Glu-493, and Lys-495 each coordinate hybrid [4Fe-2O-2S] cluster. Cys-406 carries the post-translational modification Cysteine persulfide.

The protein belongs to the HCP family. It depends on [2Fe-2S] cluster as a cofactor. Requires hybrid [4Fe-2O-2S] cluster as cofactor.

It localises to the cytoplasm. It catalyses the reaction A + NH4(+) + H2O = hydroxylamine + AH2 + H(+). Functionally, catalyzes the reduction of hydroxylamine to form NH(3) and H(2)O. This Shewanella sediminis (strain HAW-EB3) protein is Hydroxylamine reductase.